Consider the following 118-residue polypeptide: UPF0342 protein BAMEG_3696 (118 aa).

The protein belongs to the UPF0342 family.

This Bacillus anthracis (strain CDC 684 / NRRL 3495) protein is UPF0342 protein BAMEG_3696.